Consider the following 1412-residue polypeptide: Cardiac-enriched FHL2-interacting protein (1412 aa).

Disordered regions lie at residues 106–177, 202–443, 460–500, 517–848, 877–923, 935–1255, and 1344–1412; these read VQGE…PKFA, VSNT…YNPP, LETS…SKAP, YSPL…TNKH, SEDS…VPGT, EDPV…YPAT, and RQGS…EGVS. A Phosphothreonine modification is found at Thr-120. The segment covering 135–145 has biased composition (low complexity); sequence SSSKPISKVSS. Residues 161–171 show a composition bias toward pro residues; that stretch reads RPPPSKPPALK. Positions 202-212 are enriched in polar residues; it reads VSNTHQGSHQS. Composition is skewed to basic and acidic residues over residues 285–299 and 306–316; these read WDTH…KDIA and KAPKHYEDMPL. Position 328 is a phosphoserine (Ser-328). Positions 343-352 are enriched in polar residues; it reads SPSGSQSTSG. A compositionally biased stretch (basic residues) spans 378-389; it reads KRSKAPWRKPKT. Phosphoserine is present on Ser-473. 2 stretches are compositionally biased toward basic and acidic residues: residues 482-496 and 525-538; these read QEKE…DSYK and GFDE…DSKQ. Positions 587–612 are enriched in low complexity; sequence SHPTFSSPSASSQTHFCVNGEAAESN. Over residues 632–641 the composition is skewed to basic and acidic residues; sequence GHPDCRENLP. Composition is skewed to polar residues over residues 670-679, 687-697, and 712-722; these read NGLSRSVSQE, GFQSLPLNQKF, and SDSQSDFTPCR. Over residues 728 to 741 the composition is skewed to low complexity; sequence FSTSSSDQSFASFE. A compositionally biased stretch (basic and acidic residues) spans 753-799; that stretch reads QEDRKSHVSAGDKQRDETAVEKEESQQCASRNEHRGVDEQRQEEIQR. Ser-813 carries the phosphoserine modification. Residues 826 to 837 show a composition bias toward basic and acidic residues; the sequence is ADKDTAHTHAKD. Composition is skewed to polar residues over residues 904-921, 943-953, and 1047-1066; these read ASES…NDVP, QDETSQQTRKG, and AETS…SPAA. Over residues 1164–1175 the composition is skewed to basic residues; the sequence is RRAKKLASKRRK. The span at 1176 to 1203 shows a compositional bias: basic and acidic residues; sequence SDQLLEKHTEAWEGKSFTEDTQGTERRP. Residues 1401 to 1412 are compositionally biased toward acidic residues; sequence DDLEDFATEGVS.

Interacts with FHL2. Expressed in the heart and skeletal muscle (at protein level).

Its subcellular location is the cytoplasm. It localises to the myofibril. The protein localises to the sarcomere. It is found in the z line. Functionally, plays an important role in cardiomyocyte hypertrophy via activation of the calcineurin/NFAT signaling pathway. The sequence is that of Cardiac-enriched FHL2-interacting protein from Mus musculus (Mouse).